The following is a 171-amino-acid chain: Co-chaperone protein HscB (171 aa).

The J domain maps to 2–74 (DYFTLFGLPA…LTRAEYLLSL (73 aa)).

It belongs to the HscB family. In terms of assembly, interacts with HscA and stimulates its ATPase activity. Interacts with IscU.

In terms of biological role, co-chaperone involved in the maturation of iron-sulfur cluster-containing proteins. Seems to help targeting proteins to be folded toward HscA. The protein is Co-chaperone protein HscB of Salmonella arizonae (strain ATCC BAA-731 / CDC346-86 / RSK2980).